Reading from the N-terminus, the 850-residue chain is Pierisin (850 aa).

Ricin B-type lectin domains lie at 267 to 409, 413 to 560, and 564 to 707; these read GEFM…WNII, FRPI…WDIK, and YQYV…WYLK.

This sequence belongs to the pierisin ADP-ribosyltransferase family.

It catalyses the reaction a 2'-deoxyguanosine in DNA + NAD(+) = an N(2)-(ADP-L-ribosyl)-2'-deoxyguanosine in DNA + nicotinamide + H(+). In terms of biological role, ADP-ribosylates double-stranded DNA by targeting the N2 amino group of dG residues. Induces apoptosis in a range of human cell lines. May play a role in destroying cells during pupation and/or defense against parasites. The chain is Pierisin from Pieris brassicae (White butterfly).